We begin with the raw amino-acid sequence, 79 residues long: Exodeoxyribonuclease 7 small subunit (79 aa).

The protein belongs to the XseB family. Heterooligomer composed of large and small subunits.

The protein localises to the cytoplasm. The catalysed reaction is Exonucleolytic cleavage in either 5'- to 3'- or 3'- to 5'-direction to yield nucleoside 5'-phosphates.. Functionally, bidirectionally degrades single-stranded DNA into large acid-insoluble oligonucleotides, which are then degraded further into small acid-soluble oligonucleotides. In Syntrophus aciditrophicus (strain SB), this protein is Exodeoxyribonuclease 7 small subunit.